The sequence spans 816 residues: Phosphatidylinositol 4-kinase beta (816 aa).

Disordered stretches follow at residues 1 to 28 (MGDT…NGGS), 93 to 120 (PPTG…RRRR), and 249 to 318 (HRKR…SFSS). At glycine 2 the chain carries N-acetylglycine. An interaction with ACBD3 region spans residues 2 to 68 (GDTVVAPAPL…VKLSHGGVAS (67 aa)). The region spanning 49 to 242 (QKACQEVLQK…GTKLRRLILS (194 aa)) is the PIK helical domain. Residue serine 258 is modified to Phosphoserine. Threonine 263 bears the Phosphothreonine mark. 7 positions are modified to phosphoserine: serine 266, serine 275, serine 277, serine 284, serine 294, serine 428, and serine 511. The span at 278–294 (DATASISLSSSLKRTAS) shows a compositional bias: low complexity. A phosphothreonine mark is found at threonine 517 and threonine 519. In terms of domain architecture, PI3K/PI4K catalytic spans 535-801 (EPWQEKVRRI…MVDGSMRSIT (267 aa)). Positions 541 to 547 (VRRIREG) are G-loop. The segment at 668 to 676 (QVKDRHNGN) is catalytic loop. The interval 687 to 711 (HIDFGFILSSSPRNLGFETSAFKLT) is activation loop.

The protein belongs to the PI3/PI4-kinase family. Type III PI4K subfamily. In terms of assembly, interacts with ARF1 and ARF3 in the Golgi complex, but not with ARF4, ARF5 or ARF6. Interacts with NCS1/FREQ in a calcium-independent manner. Interacts with CALN1/CABP8 and CALN2/CABP7; in a calcium-dependent manner; this interaction competes with NCS1/FREQ binding. Interacts with ACBD3. Interacts with ARMH3, YWHAB, YWHAE, YWHAG, YWHAH, YWHAQ, YWHAZ and SFN. Interacts with GGA2 (via VHS domain); the interaction is important for PI4KB location at the Golgi apparatus membrane. Interacts with ATG9A. The cofactor is Mg(2+). Mn(2+) serves as cofactor.

Its subcellular location is the endomembrane system. The protein resides in the mitochondrion outer membrane. The protein localises to the rough endoplasmic reticulum membrane. It localises to the golgi apparatus. It is found in the golgi apparatus membrane. It catalyses the reaction a 1,2-diacyl-sn-glycero-3-phospho-(1D-myo-inositol) + ATP = a 1,2-diacyl-sn-glycero-3-phospho-(1D-myo-inositol 4-phosphate) + ADP + H(+). With respect to regulation, inhibited by wortmannin. Increased kinase activity upon interaction with NCS1/FREQ. Its function is as follows. Phosphorylates phosphatidylinositol (PI) in the first committed step in the production of the second messenger inositol-1,4,5,-trisphosphate (PIP). May regulate Golgi disintegration/reorganization during mitosis, possibly via its phosphorylation. Involved in Golgi-to-plasma membrane trafficking. May play an important role in the inner ear development. This Rhinolophus ferrumequinum (Greater horseshoe bat) protein is Phosphatidylinositol 4-kinase beta (PI4KB).